Reading from the N-terminus, the 196-residue chain is Imidazoleglycerol-phosphate dehydratase (196 aa).

This sequence belongs to the imidazoleglycerol-phosphate dehydratase family.

It is found in the cytoplasm. It catalyses the reaction D-erythro-1-(imidazol-4-yl)glycerol 3-phosphate = 3-(imidazol-4-yl)-2-oxopropyl phosphate + H2O. Its pathway is amino-acid biosynthesis; L-histidine biosynthesis; L-histidine from 5-phospho-alpha-D-ribose 1-diphosphate: step 6/9. The protein is Imidazoleglycerol-phosphate dehydratase of Dehalococcoides mccartyi (strain ATCC BAA-2266 / KCTC 15142 / 195) (Dehalococcoides ethenogenes (strain 195)).